We begin with the raw amino-acid sequence, 672 residues long: Nuclear hormone receptor family member nhr-5 (672 aa).

Over residues 1 to 19 (MSSGGNSSNVNRNSGSSNV) the composition is skewed to low complexity. Positions 1–38 (MSSGGNSSNVNRNSGSSNVITLNDSDEETEDSNLGSSS) are disordered. Positions 40–115 (TNLCKVCGAE…EGMNPAYVRP (76 aa)) form a DNA-binding region, nuclear receptor. NR C4-type zinc fingers lie at residues 43–63 (CKVC…CVGC) and 79–98 (CAAN…CRSC). In terms of domain architecture, NR LBD spans 155 to 424 (EMRTILMTLL…PLLTDLFGCF (270 aa)). The segment at 550 to 577 (NIQGPSHLPQCGSTVTQRPTVPSSTTSS) is disordered. Low complexity predominate over residues 562–577 (STVTQRPTVPSSTTSS).

The protein belongs to the nuclear hormone receptor family.

It is found in the nucleus. Its function is as follows. Orphan nuclear receptor. The sequence is that of Nuclear hormone receptor family member nhr-5 (nhr-5) from Caenorhabditis elegans.